We begin with the raw amino-acid sequence, 97 residues long: YcgL domain-containing protein PA1295 (97 aa).

A YcgL domain is found at 3–87 (RICSVYKSPR…GEEEYIEHLP (85 aa)).

In Pseudomonas aeruginosa (strain ATCC 15692 / DSM 22644 / CIP 104116 / JCM 14847 / LMG 12228 / 1C / PRS 101 / PAO1), this protein is YcgL domain-containing protein PA1295.